Consider the following 394-residue polypeptide: Phosphoglycerate kinase (394 aa).

Substrate is bound by residues 21–23, Arg-36, 59–62, Arg-118, and Arg-151; these read DFN and HLGR. Ser-183 carries the phosphoserine modification. Residue Lys-201 coordinates ATP. Thr-299 bears the Phosphothreonine mark. ATP contacts are provided by residues Glu-323 and 350-353; that span reads GGDS.

Belongs to the phosphoglycerate kinase family. In terms of assembly, monomer.

It is found in the cytoplasm. The enzyme catalyses (2R)-3-phosphoglycerate + ATP = (2R)-3-phospho-glyceroyl phosphate + ADP. It functions in the pathway carbohydrate degradation; glycolysis; pyruvate from D-glyceraldehyde 3-phosphate: step 2/5. The sequence is that of Phosphoglycerate kinase from Halalkalibacterium halodurans (strain ATCC BAA-125 / DSM 18197 / FERM 7344 / JCM 9153 / C-125) (Bacillus halodurans).